Consider the following 1140-residue polypeptide: Eukaryotic translation initiation factor 3 subunit A (1140 aa).

The 183-residue stretch at 319–501 (LQRMAAHVLL…NSIYFGTDLT (183 aa)) folds into the PCI domain. Basic and acidic residues-rich tracts occupy residues 588–623 (QNNA…EERE) and 829–899 (AAEE…RGGD). Disordered regions lie at residues 588 to 630 (QNNA…HQNE) and 829 to 1140 (AAEE…VKRR). Residue Ser908 is modified to Phosphoserine. Composition is skewed to basic and acidic residues over residues 920 to 976 (ERND…EPDS), 990 to 1051 (SRDD…EPQR), 1059 to 1086 (DAPR…RGDQ), and 1109 to 1130 (TREE…KAGD).

Belongs to the eIF-3 subunit A family. As to quaternary structure, component of the eukaryotic translation initiation factor 3 (eIF-3) complex. The eIF-3 complex interacts with pix.

Its subcellular location is the cytoplasm. Its function is as follows. RNA-binding component of the eukaryotic translation initiation factor 3 (eIF-3) complex, which is involved in protein synthesis of a specialized repertoire of mRNAs and, together with other initiation factors, stimulates binding of mRNA and methionyl-tRNAi to the 40S ribosome. The eIF-3 complex specifically targets and initiates translation of a subset of mRNAs involved in cell proliferation. The protein is Eukaryotic translation initiation factor 3 subunit A of Drosophila melanogaster (Fruit fly).